Here is a 727-residue protein sequence, read N- to C-terminus: Engulfment and cell motility protein 1 (727 aa).

The residue at position 18 (Tyr18) is a Phosphotyrosine; by HCK. N6-acetyllysine is present on residues Lys100 and Lys105. The residue at position 216 (Tyr216) is a Phosphotyrosine; by HCK. One can recognise an ELMO domain in the interval 319 to 492 (AQRDIIFELR…VVKEQVMRAL (174 aa)). Residue Ser344 is modified to Phosphoserine. Residues Tyr395 and Tyr511 each carry the phosphotyrosine; by HCK modification. In terms of domain architecture, PH spans 555 to 676 (RLVEGTCFRK…DGLNALLGKD (122 aa)). Positions 707–714 (PDAPPPIP) match the SH3-binding motif. Tyr720 is modified (phosphotyrosine; by HCK).

In terms of assembly, interacts with ADGRB1. Interacts directly with the SH3-domain of DOCK1 via its SH3-binding site. Part of a complex with DOCK1 and RAC1. Part of a complex with DOCK1 and CRK isoform CRK-II. Interacts with PLEKHG6. Interacts with HCK (via SH3 domain). Interacts with ADGRB3. Interacts with DOCK5. In terms of processing, phosphorylated by HCK. Widely expressed, with a higher expression in the spleen and placenta.

The protein resides in the cytoplasm. It is found in the cell membrane. Its function is as follows. Involved in cytoskeletal rearrangements required for phagocytosis of apoptotic cells and cell motility. Acts in association with DOCK1 and CRK. Was initially proposed to be required in complex with DOCK1 to activate Rac Rho small GTPases. May enhance the guanine nucleotide exchange factor (GEF) activity of DOCK1. The protein is Engulfment and cell motility protein 1 (ELMO1) of Homo sapiens (Human).